A 514-amino-acid polypeptide reads, in one-letter code: Carboxysome shell carbonic anhydrase (514 aa).

The interval 1 to 27 (MAYRNRNLASQTQRPLAPTAPRRRPVV) is disordered. Cys175 contacts Zn(2+). The active-site Proton acceptor is Asp177. 2 residues coordinate Zn(2+): His243 and Cys254.

It belongs to the beta-class carbonic anhydrase family. CsoSCA subfamily. Homodimer. It depends on Zn(2+) as a cofactor.

The protein resides in the carboxysome. It carries out the reaction hydrogencarbonate + H(+) = CO2 + H2O. In terms of biological role, reversible hydration of carbon dioxide. Essential for photosynthetic carbon dioxide fixation, supplies CO(2) to RuBisCO (ribulose bisphosphate carboxylase, cbbL-cbbS) in the carboxysome. The sequence is that of Carboxysome shell carbonic anhydrase from Prochlorococcus marinus (strain MIT 9313).